A 294-amino-acid polypeptide reads, in one-letter code: Protoheme IX farnesyltransferase (294 aa).

9 consecutive transmembrane segments (helical) span residues 22–42 (VTQLAVFCAVIGMFLATPDLP), 46–66 (IVIAATIGIWLLAGAAFAINC), 89–109 (ITVPQTLVFSGVIGGAGMWVL), 116–136 (LTMWLTFATFVGYAVIYTIIL), 143–163 (NIVIGGLSGAMPPALGWAAVA), 170–190 (AWILVLIIFIWTPPHFWALAL), 211–231 (AFTQFHIWLYTIALVATTMLP), 232–252 (FAVGMSGLIYLVVAAVLDVIF), and 272–292 (FTYSIIYLSLLFAALLVDHYL).

This sequence belongs to the UbiA prenyltransferase family. Protoheme IX farnesyltransferase subfamily.

Its subcellular location is the cell inner membrane. The catalysed reaction is heme b + (2E,6E)-farnesyl diphosphate + H2O = Fe(II)-heme o + diphosphate. It functions in the pathway porphyrin-containing compound metabolism; heme O biosynthesis; heme O from protoheme: step 1/1. Functionally, converts heme B (protoheme IX) to heme O by substitution of the vinyl group on carbon 2 of heme B porphyrin ring with a hydroxyethyl farnesyl side group. This is Protoheme IX farnesyltransferase from Herminiimonas arsenicoxydans.